The chain runs to 138 residues: Basic phospholipase A2 chain HDP-2P (138 aa).

Positions 1–16 are cleaved as a signal peptide; it reads MRILWIVAVCLIGVEG. 7 disulfides stabilise this stretch: Cys-42/Cys-131, Cys-44/Cys-60, Cys-59/Cys-111, Cys-65/Cys-138, Cys-66/Cys-104, Cys-73/Cys-97, and Cys-91/Cys-102. Residues Tyr-43, Gly-45, and Gly-47 each coordinate Ca(2+). His-63 is a catalytic residue. Asp-64 lines the Ca(2+) pocket. Asp-105 is a catalytic residue.

As to quaternary structure, heterodimer of an acidic and a basic chain; non-covalently linked. The toxic basic protein has phospholipase A2 activity (chain HDP-2P) and the non-toxic acidic protein functions as its inhibitor (chain HPD-1I (AC A4VBF0)). Ca(2+) serves as cofactor. As to expression, expressed by the venom gland.

The protein resides in the secreted. The enzyme catalyses a 1,2-diacyl-sn-glycero-3-phosphocholine + H2O = a 1-acyl-sn-glycero-3-phosphocholine + a fatty acid + H(+). Its activity is regulated as follows. Enzymatic activity and neurotoxicity are inhibited by Triton X-100. Triton X-100 has been determined to be located in the center of the hydrophobic channel of the enzyme. Functionally, monomer: snake venom phospholipase A2 (PLA2) that affects neuromuscular transmission presynaptically. It has catalytic activity, anticoagulant activity and weakly inhibits ADP-induced platelet aggregation. PLA2 catalyzes the calcium-dependent hydrolysis of the 2-acyl groups in 3-sn-phosphoglycerides. In terms of biological role, heterodimer: shows the same activities as the monomer, but with a lower potency. The protein is Basic phospholipase A2 chain HDP-2P of Vipera nikolskii (Nikolsky's adder).